Reading from the N-terminus, the 98-residue chain is VQ motif-containing protein 1 (98 aa).

The VQ motif lies at 27 to 36 (FKTIVQELTG).

Interacts with WRKY33.

The protein resides in the nucleus. May modulate WRKY transcription factor activities. In Arabidopsis thaliana (Mouse-ear cress), this protein is VQ motif-containing protein 1.